Consider the following 227-residue polypeptide: MALLTDDFDAVVASRRAVRAFLPTPISRKLISEIIDIARLAPSNSNTQPWSIHVLTGEPKQALSALLGIAHNDPSADPLAHLPDDLARKYRERQEKWGELFYGLHQIDKCDDAGRARVSGLNFDFFGAPVGLIFTIDSNLKKYSWLDYGLFLQTLMLTARSRGLSTCPQVSFARFQSLIKDFLHLDDSQEIVCGMSLGYADENATVNSLRMPREMAQGFTHFMGFDR.

Position 15 to 19 (Arg15 to Arg19) interacts with FMN. Ser45, Tyr102, and Ile107 together coordinate NAD(+). Arg213 is a binding site for FMN.

The protein belongs to the nitroreductase family. FMN serves as cofactor.

The catalysed reaction is 4-nitrobenzoate + 2 NADH + 2 H(+) = 4-hydroxylaminobenzoate + 2 NAD(+) + H2O. Nitroreductase involved in the degradation of nitroaromatic compounds. Catalyzes the conversion of 4-nitrobenzoate to 4-hydroxylaminobenzoate. Required for the catabolism of 4-nitrotoluene. The chain is 4-nitrobenzoate reductase from Pseudomonas putida (Arthrobacter siderocapsulatus).